Here is a 282-residue protein sequence, read N- to C-terminus: Succinate dehydrogenase [ubiquinone] iron-sulfur subunit, mitochondrial (282 aa).

The transit peptide at 1-26 (MAAVVFSLRRSGPVLRLSGALQVSRG) directs the protein to the mitochondrion. One can recognise a 2Fe-2S ferredoxin-type domain in the interval 42 to 135 (KKFAIYRWDP…VSKIYPLPHM (94 aa)). Residues C95, C100, C103, and C115 each coordinate [2Fe-2S] cluster. The region spanning 178-208 (DRDKLDGLYECILCACCSTSCPSYWWNADKY) is the 4Fe-4S ferredoxin-type domain. The [4Fe-4S] cluster site is built by C188, C191, and C194. C198 serves as a coordination point for [3Fe-4S] cluster. W203 serves as a coordination point for a ubiquinone. 2 residues coordinate [3Fe-4S] cluster: C245 and C251. Residue C255 participates in [4Fe-4S] cluster binding.

It belongs to the succinate dehydrogenase/fumarate reductase iron-sulfur protein family. In terms of assembly, component of complex II composed of four subunits: the flavoprotein (FP) sdha, iron-sulfur protein (IP) sdhb, and a cytochrome b composed of sdhc and sdhd. Requires [2Fe-2S] cluster as cofactor. [3Fe-4S] cluster is required as a cofactor. [4Fe-4S] cluster serves as cofactor.

Its subcellular location is the mitochondrion inner membrane. The enzyme catalyses a quinone + succinate = fumarate + a quinol. It carries out the reaction (R)-malate + a quinone = enol-oxaloacetate + a quinol. The catalysed reaction is (S)-malate + a quinone = enol-oxaloacetate + a quinol. The protein operates within carbohydrate metabolism; tricarboxylic acid cycle; fumarate from succinate (eukaryal route): step 1/1. With respect to regulation, enol-oxaloacetate inhibits the succinate dehydrogenase activity. Functionally, iron-sulfur protein (IP) subunit of the succinate dehydrogenase complex (mitochondrial respiratory chain complex II), responsible for transferring electrons from succinate to ubiquinone (coenzyme Q). SDH also oxidizes malate to the non-canonical enol form of oxaloacetate, enol-oxaloacetate. Enol-oxaloacetate, which is a potent inhibitor of the succinate dehydrogenase activity, is further isomerized into keto-oxaloacetate. The sequence is that of Succinate dehydrogenase [ubiquinone] iron-sulfur subunit, mitochondrial (sdhb) from Xenopus laevis (African clawed frog).